A 102-amino-acid chain; its full sequence is Protein translation factor SUI1 homolog (102 aa).

The protein belongs to the SUI1 family.

In Cenarchaeum symbiosum (strain A), this protein is Protein translation factor SUI1 homolog.